The following is a 263-amino-acid chain: Ribosomal RNA large subunit methyltransferase E (263 aa).

S-adenosyl-L-methionine-binding residues include glycine 50, tryptophan 52, aspartate 68, asparagine 84, and aspartate 109. Lysine 149 acts as the Proton acceptor in catalysis. Residues 196-254 form the TRAM domain; sequence PLRKGDKFVVDIEKLGSSGDGAVLIEGFVVFVKEVEVGEKVRIKITDVKPNFAFADVAE.

The protein belongs to the class I-like SAM-binding methyltransferase superfamily. RNA methyltransferase RlmE family.

Its subcellular location is the cytoplasm. The enzyme catalyses uridine(2552) in 23S rRNA + S-adenosyl-L-methionine = 2'-O-methyluridine(2552) in 23S rRNA + S-adenosyl-L-homocysteine + H(+). Specifically methylates the uridine in position 2552 of 23S rRNA at the 2'-O position of the ribose in the fully assembled 50S ribosomal subunit. The sequence is that of Ribosomal RNA large subunit methyltransferase E from Methanosarcina barkeri (strain Fusaro / DSM 804).